A 295-amino-acid chain; its full sequence is Cyclin-G1 (295 aa).

It belongs to the cyclin family. Cyclin G subfamily.

Its subcellular location is the nucleus. Its function is as follows. May play a role in growth regulation. Is associated with G2/M phase arrest in response to DNA damage. May be an intermediate by which p53 mediates its role as an inhibitor of cellular proliferation. This is Cyclin-G1 (CCNG1) from Pongo abelii (Sumatran orangutan).